A 453-amino-acid chain; its full sequence is Ribulose bisphosphate carboxylase large chain (453 aa).

A propeptide spanning residues 1 to 2 is cleaved from the precursor; that stretch reads MS. Position 3 is an N-acetylproline (Pro-3). Lys-14 is subject to N6,N6,N6-trimethyllysine. Substrate is bound by residues Asn-123 and Thr-173. Residue Lys-175 is the Proton acceptor of the active site. A substrate-binding site is contributed by Lys-177. Lys-201, Asp-203, and Glu-204 together coordinate Mg(2+). Lys-201 carries the post-translational modification N6-carboxylysine. His-294 functions as the Proton acceptor in the catalytic mechanism. Residues Arg-295, His-327, and Ser-379 each coordinate substrate.

Belongs to the RuBisCO large chain family. Type I subfamily. Heterohexadecamer of 8 large chains and 8 small chains; disulfide-linked. The disulfide link is formed within the large subunit homodimers. Mg(2+) serves as cofactor. Post-translationally, the disulfide bond which can form in the large chain dimeric partners within the hexadecamer appears to be associated with oxidative stress and protein turnover.

The protein resides in the plastid. Its subcellular location is the chloroplast. It carries out the reaction 2 (2R)-3-phosphoglycerate + 2 H(+) = D-ribulose 1,5-bisphosphate + CO2 + H2O. It catalyses the reaction D-ribulose 1,5-bisphosphate + O2 = 2-phosphoglycolate + (2R)-3-phosphoglycerate + 2 H(+). Functionally, ruBisCO catalyzes two reactions: the carboxylation of D-ribulose 1,5-bisphosphate, the primary event in carbon dioxide fixation, as well as the oxidative fragmentation of the pentose substrate in the photorespiration process. Both reactions occur simultaneously and in competition at the same active site. The protein is Ribulose bisphosphate carboxylase large chain of Rubia tinctorum (Madder).